A 253-amino-acid polypeptide reads, in one-letter code: Phosphate import ATP-binding protein PstB 1 (253 aa).

Positions Leu7–Ile248 constitute an ABC transporter domain. Gly39–Ser46 is a binding site for ATP.

This sequence belongs to the ABC transporter superfamily. Phosphate importer (TC 3.A.1.7) family. As to quaternary structure, the complex is composed of two ATP-binding proteins (PstB), two transmembrane proteins (PstC and PstA) and a solute-binding protein (PstS).

Its subcellular location is the cell membrane. It carries out the reaction phosphate(out) + ATP + H2O = ADP + 2 phosphate(in) + H(+). Functionally, part of the ABC transporter complex PstSACB involved in phosphate import. Responsible for energy coupling to the transport system. This chain is Phosphate import ATP-binding protein PstB 1, found in Streptococcus pyogenes serotype M12 (strain MGAS9429).